The sequence spans 427 residues: Flotillin-1 (427 aa).

Residues serine 19, serine 163, and serine 385 each carry the phosphoserine modification. At threonine 387 the chain carries Phosphothreonine.

It belongs to the band 7/mec-2 family. Flotillin subfamily. In terms of assembly, heterooligomeric complex of flotillin-1 and flotillin-2 and caveolin-1 and caveolin-2. Interacts with ECPAS.

It localises to the cell membrane. The protein resides in the endosome. Its subcellular location is the membrane. The protein localises to the caveola. It is found in the melanosome. It localises to the membrane raft. Functionally, may act as a scaffolding protein within caveolar membranes, functionally participating in formation of caveolae or caveolae-like vesicles. The sequence is that of Flotillin-1 (FLOT1) from Sus scrofa (Pig).